A 433-amino-acid polypeptide reads, in one-letter code: Isocitrate dehydrogenase [NADP], chloroplastic (433 aa).

Residues 1-21 (QFSPNLSFSAFFPIITFTTAT) constitute a chloroplast transit peptide. Residues 98–100 (TIT) and arginine 105 each bind NADP(+). Threonine 100 serves as a coordination point for substrate. Substrate contacts are provided by residues 117-123 (SPNGTIR), arginine 132, and arginine 155. Aspartate 275 is a binding site for Mn(2+). Lysine 283 is an NADP(+) binding site. Aspartate 298 contacts Mn(2+). NADP(+) contacts are provided by residues 333–338 (GTVTRH) and asparagine 351.

This sequence belongs to the isocitrate and isopropylmalate dehydrogenases family. Mg(2+) serves as cofactor. Mn(2+) is required as a cofactor. Detected in all tissues examined.

It is found in the plastid. The protein resides in the chloroplast. It carries out the reaction D-threo-isocitrate + NADP(+) = 2-oxoglutarate + CO2 + NADPH. This is Isocitrate dehydrogenase [NADP], chloroplastic from Medicago sativa (Alfalfa).